The chain runs to 278 residues: Chitosanase (278 aa).

The N-terminal stretch at 1 to 41 (MRLKHPTARLALAALLVAVPRSVAAAGTVHAAPAPAGATRL) is a signal peptide. The Proton donor role is filled by E63. The active-site Nucleophile is D81.

This sequence belongs to the glycosyl hydrolase 46 family.

The protein resides in the secreted. It carries out the reaction Endohydrolysis of beta-(1-&gt;4)-linkages between D-glucosamine residues in a partly acetylated chitosan.. Its function is as follows. Aids in the defense against invading fungal pathogens by degrading their cell wall chitosan. The chain is Chitosanase (csn) from Nocardioides sp. (strain N106).